A 61-amino-acid polypeptide reads, in one-letter code: Probable tautomerase SAV1363 (61 aa).

The Proton acceptor; via imino nitrogen role is filled by Pro-2.

The protein belongs to the 4-oxalocrotonate tautomerase family.

In Staphylococcus aureus (strain Mu50 / ATCC 700699), this protein is Probable tautomerase SAV1363.